Consider the following 64-residue polypeptide: Prokaryotic ubiquitin-like protein Pup (64 aa).

A compositionally biased stretch (polar residues) spans 1–10 (MNQNGSQIHS). Residues 1 to 32 (MNQNGSQIHSDGNGHSDDTDTPGVSAGQVSVN) form a disordered region. Residues 20-58 (DTPGVSAGQVSVNTAGVDDLLDEIDGLLESNAEEFVRSY) are ARC ATPase binding. A Deamidated glutamine modification is found at Gln-64. Gln-64 participates in a covalent cross-link: Isoglutamyl lysine isopeptide (Gln-Lys) (interchain with K-? in acceptor proteins).

It belongs to the prokaryotic ubiquitin-like protein family. Strongly interacts with the proteasome-associated ATPase ARC through a hydrophobic interface; the interacting region of Pup lies in its C-terminal half. There is one Pup binding site per ARC hexamer ring. Is modified by deamidation of its C-terminal glutamine to glutamate by the deamidase Dop, a prerequisite to the subsequent pupylation process.

Its pathway is protein degradation; proteasomal Pup-dependent pathway. Functionally, protein modifier that is covalently attached to lysine residues of substrate proteins, thereby targeting them for proteasomal degradation. The tagging system is termed pupylation. This chain is Prokaryotic ubiquitin-like protein Pup, found in Corynebacterium diphtheriae (strain ATCC 700971 / NCTC 13129 / Biotype gravis).